Here is a 442-residue protein sequence, read N- to C-terminus: Elongation factor 1-alpha (442 aa).

The tr-type G domain occupies 5–228; the sequence is KTHINIVVIG…DSVTPPERPV (224 aa). Positions 14–21 are G1; it reads GHVDSGKS. 14–21 is a binding site for GTP; sequence GHVDSGKS. Positions 70-74 are G2; the sequence is GITID. Positions 91-94 are G3; it reads DAPG. GTP contacts are provided by residues 91–95 and 153–156; these read DAPGH and NKMD. The segment at 153–156 is G4; sequence NKMD. Residues 192-194 form a G5 region; that stretch reads SGF.

This sequence belongs to the TRAFAC class translation factor GTPase superfamily. Classic translation factor GTPase family. EF-Tu/EF-1A subfamily.

Its subcellular location is the cytoplasm. Its function is as follows. This protein promotes the GTP-dependent binding of aminoacyl-tRNA to the A-site of ribosomes during protein biosynthesis. The protein is Elongation factor 1-alpha of Entamoeba histolytica (strain ATCC 30459 / HM-1:IMSS / ABRM).